The sequence spans 327 residues: DNA-directed RNA polymerase subunit alpha (327 aa).

The interval 1-233 is alpha N-terminal domain (alpha-NTD); sequence MQGSVTEFLK…EQLEAFVDLR (233 aa). Residues 247 to 327 are alpha C-terminal domain (alpha-CTD); sequence FDPVLLRPVD…NWPPLGFIDK (81 aa).

Belongs to the RNA polymerase alpha chain family. In terms of assembly, homodimer. The RNAP catalytic core consists of 2 alpha, 1 beta, 1 beta' and 1 omega subunit. When a sigma factor is associated with the core the holoenzyme is formed, which can initiate transcription.

It carries out the reaction RNA(n) + a ribonucleoside 5'-triphosphate = RNA(n+1) + diphosphate. In terms of biological role, DNA-dependent RNA polymerase catalyzes the transcription of DNA into RNA using the four ribonucleoside triphosphates as substrates. The sequence is that of DNA-directed RNA polymerase subunit alpha from Baumannia cicadellinicola subsp. Homalodisca coagulata.